Here is a 224-residue protein sequence, read N- to C-terminus: GTP cyclohydrolase 1 (224 aa).

The segment at 1–20 (MKQEKTVSPTVENNRSAESR) is disordered. Zn(2+)-binding residues include Cys-114, His-117, and Cys-185.

This sequence belongs to the GTP cyclohydrolase I family. Toroid-shaped homodecamer, composed of two pentamers of five dimers.

It catalyses the reaction GTP + H2O = 7,8-dihydroneopterin 3'-triphosphate + formate + H(+). The protein operates within cofactor biosynthesis; 7,8-dihydroneopterin triphosphate biosynthesis; 7,8-dihydroneopterin triphosphate from GTP: step 1/1. The polypeptide is GTP cyclohydrolase 1 (Chlorobaculum tepidum (strain ATCC 49652 / DSM 12025 / NBRC 103806 / TLS) (Chlorobium tepidum)).